Consider the following 112-residue polypeptide: Small capsomere-interacting protein (112 aa).

It belongs to the herpesviridae small capsomere-interacting protein family. As to quaternary structure, interacts with the major capsid protein/MCP.

Its subcellular location is the virion. The protein localises to the host nucleus. Participates in the assembly of the infectious particles by decorating the outer surface of the capsid shell and thus forming a layer between the capsid and the tegument. Complexes composed of the major capsid protein and small capsomere-interacting protein/SCP assemble together in the host cytoplasm and are translocated to the nucleus, where they accumulate and participate in capsid assembly. In Homo sapiens (Human), this protein is Small capsomere-interacting protein.